The following is a 577-amino-acid chain: Proline--tRNA ligase (577 aa).

It belongs to the class-II aminoacyl-tRNA synthetase family. ProS type 1 subfamily. In terms of assembly, homodimer.

It localises to the cytoplasm. The catalysed reaction is tRNA(Pro) + L-proline + ATP = L-prolyl-tRNA(Pro) + AMP + diphosphate. In terms of biological role, catalyzes the attachment of proline to tRNA(Pro) in a two-step reaction: proline is first activated by ATP to form Pro-AMP and then transferred to the acceptor end of tRNA(Pro). As ProRS can inadvertently accommodate and process non-cognate amino acids such as alanine and cysteine, to avoid such errors it has two additional distinct editing activities against alanine. One activity is designated as 'pretransfer' editing and involves the tRNA(Pro)-independent hydrolysis of activated Ala-AMP. The other activity is designated 'posttransfer' editing and involves deacylation of mischarged Ala-tRNA(Pro). The misacylated Cys-tRNA(Pro) is not edited by ProRS. This is Proline--tRNA ligase from Thermotoga maritima (strain ATCC 43589 / DSM 3109 / JCM 10099 / NBRC 100826 / MSB8).